Here is a 107-residue protein sequence, read N- to C-terminus: 2Fe-2S ferredoxin CtmE (107 aa).

A 2Fe-2S ferredoxin-type domain is found at 3–106 (VKVTYVDSAN…GLVIHTLEPE (104 aa)). The [2Fe-2S] cluster site is built by C41, C47, C50, and C87.

The protein belongs to the adrenodoxin/putidaredoxin family. The cofactor is [2Fe-2S] cluster.

It functions in the pathway terpene metabolism; monoterpene degradation. Functionally, involved in the degradation of the cyclic monoterpene limonene. Probably part of an electron transfer system involved in the oxidation of limonene to perillyl alcohol. The sequence is that of 2Fe-2S ferredoxin CtmE from Castellaniella defragrans (strain DSM 12143 / CCUG 39792 / 65Phen) (Alcaligenes defragrans).